Consider the following 209-residue polypeptide: Large ribosomal subunit protein uL3 (209 aa).

Positions 127-166 (NFGGGSRTHGQSDRLRAPGSVGGSSDPSRTFKGTRMAGRM) are disordered.

This sequence belongs to the universal ribosomal protein uL3 family. As to quaternary structure, part of the 50S ribosomal subunit. Forms a cluster with proteins L14 and L19.

Its function is as follows. One of the primary rRNA binding proteins, it binds directly near the 3'-end of the 23S rRNA, where it nucleates assembly of the 50S subunit. The chain is Large ribosomal subunit protein uL3 from Chlorobaculum tepidum (strain ATCC 49652 / DSM 12025 / NBRC 103806 / TLS) (Chlorobium tepidum).